Reading from the N-terminus, the 310-residue chain is Malate dehydrogenase (310 aa).

NAD(+) is bound by residues 7 to 13 (GAAGGIG) and Asp-34. Residues Arg-81 and Arg-87 each contribute to the substrate site. NAD(+)-binding positions include Asn-94 and 117-119 (ITN). Residues Asn-119 and Arg-153 each coordinate substrate. His-177 functions as the Proton acceptor in the catalytic mechanism. Met-227 is a binding site for NAD(+).

The protein belongs to the LDH/MDH superfamily. MDH type 1 family. As to quaternary structure, homodimer.

It catalyses the reaction (S)-malate + NAD(+) = oxaloacetate + NADH + H(+). Its function is as follows. Catalyzes the reversible oxidation of malate to oxaloacetate. The chain is Malate dehydrogenase from Pseudoalteromonas translucida (strain TAC 125).